The following is a 414-amino-acid chain: CCA-adding enzyme (414 aa).

Positions 8 and 11 each coordinate ATP. CTP is bound by residues Gly-8 and Arg-11. Mg(2+) contacts are provided by Asp-21 and Asp-23. 3 residues coordinate ATP: Arg-92, Arg-138, and Arg-141. Residues Arg-92, Arg-138, and Arg-141 each coordinate CTP.

It belongs to the tRNA nucleotidyltransferase/poly(A) polymerase family. Bacterial CCA-adding enzyme type 2 subfamily. It depends on Mg(2+) as a cofactor.

The catalysed reaction is a tRNA precursor + 2 CTP + ATP = a tRNA with a 3' CCA end + 3 diphosphate. The enzyme catalyses a tRNA with a 3' CCA end + 2 CTP + ATP = a tRNA with a 3' CCACCA end + 3 diphosphate. In terms of biological role, catalyzes the addition and repair of the essential 3'-terminal CCA sequence in tRNAs without using a nucleic acid template. Adds these three nucleotides in the order of C, C, and A to the tRNA nucleotide-73, using CTP and ATP as substrates and producing inorganic pyrophosphate. tRNA 3'-terminal CCA addition is required both for tRNA processing and repair. Also involved in tRNA surveillance by mediating tandem CCA addition to generate a CCACCA at the 3' terminus of unstable tRNAs. While stable tRNAs receive only 3'-terminal CCA, unstable tRNAs are marked with CCACCA and rapidly degraded. The protein is CCA-adding enzyme of Buchnera aphidicola subsp. Cinara cedri (strain Cc).